A 205-amino-acid chain; its full sequence is Beta-crystallin B2 (205 aa).

Ala-2 carries the N-acetylalanine modification. An N-terminal arm region spans residues 2–16 (ASDHQTQAGKPQSLN). 2 Beta/gamma crystallin 'Greek key' domains span residues 17–56 (PKII…LVQA) and 57–101 (GPWV…RPIK). A connecting peptide region spans residues 102 to 106 (VDSQE). 2 Beta/gamma crystallin 'Greek key' domains span residues 107-148 (HKII…RVQS) and 149-191 (GTWV…RRIR). The segment at 193–205 (MQWHQRGAFHPSN) is C-terminal arm.

It belongs to the beta/gamma-crystallin family. As to quaternary structure, homo/heterodimer, or complexes of higher-order. The structure of beta-crystallin oligomers seems to be stabilized through interactions between the N-terminal arms.

Functionally, crystallins are the dominant structural components of the vertebrate eye lens. This Homo sapiens (Human) protein is Beta-crystallin B2 (CRYBB2).